We begin with the raw amino-acid sequence, 101 residues long: uncharacterized protein (101 aa).

This is an uncharacterized protein from Acanthamoeba polyphaga mimivirus (APMV).